The chain runs to 175 residues: Protein TWIN SISTER of FT (175 aa).

It belongs to the phosphatidylethanolamine-binding protein family.

Its subcellular location is the cytoplasm. In terms of biological role, may form complexes with phosphorylated ligands by interfering with kinases and their effectors. The polypeptide is Protein TWIN SISTER of FT (TSF) (Arabidopsis thaliana (Mouse-ear cress)).